A 734-amino-acid chain; its full sequence is Sulfate transporter (734 aa).

A compositionally biased stretch (basic and acidic residues) spans 1–18; that stretch reads MSLKNEDQNDLSPKDSVK. The segment at 1-38 is disordered; the sequence is MSLKNEDQNDLSPKDSVKGNDQYRAPSGIHLEPEEESR. Ser12 and Ser16 each carry phosphoserine. The next 2 membrane-spanning stretches (helical) occupy residues 113-133 and 138-158; these read VMSG…YSLL and PIYG…LGTS. N-linked (GlcNAc...) asparagine glycosylation is present at Asn194. 6 consecutive transmembrane segments (helical) span residues 214-234, 237-257, 379-399, 415-435, 453-473, and 519-539; these read IIVG…MGFF, GFVS…GASF, VDAI…SEMF, AIGF…SAAL, VMTA…FFSL, and LIST…CVIL. One can recognise an STAS domain in the interval 563 to 714; sequence AYKNLQAKSG…YSIYEAMTFA (152 aa).

Belongs to the SLC26A/SulP transporter (TC 2.A.53) family. In terms of processing, N-glycosylated.

The protein resides in the cell membrane. Its subcellular location is the apical cell membrane. It catalyses the reaction oxalate(in) + sulfate(out) = oxalate(out) + sulfate(in). The catalysed reaction is sulfate(out) + 2 chloride(in) = sulfate(in) + 2 chloride(out). The enzyme catalyses oxalate(out) + 2 chloride(in) = oxalate(in) + 2 chloride(out). It carries out the reaction bromide(in) + chloride(out) = bromide(out) + chloride(in). It catalyses the reaction nitrate(in) + chloride(out) = nitrate(out) + chloride(in). The catalysed reaction is iodide(in) + chloride(out) = iodide(out) + chloride(in). Sulfate transporter which mediates sulfate uptake into chondrocytes in order to maintain adequate sulfation of proteoglycans which is needed for cartilage development. Mediates electroneutral anion exchange of sulfate ions for oxalate ions, sulfate and oxalate ions for chloride and/or hydroxyl ions and chloride ions for bromide, iodide and nitrate ions. The coupling of sulfate transport to both hydroxyl and chloride ions likely serves to ensure transport at both acidic pH when most sulfate uptake is mediated by sulfate-hydroxide exchange and alkaline pH when most sulfate uptake is mediated by sulfate-chloride exchange. Essential for chondrocyte proliferation, differentiation and cell size expansion. The polypeptide is Sulfate transporter (SLC26A2) (Bos taurus (Bovine)).